The following is a 101-amino-acid chain: Small ribosomal subunit protein uS14 (101 aa).

Over residues 1-10 (MAKKSSIEKN) the composition is skewed to basic and acidic residues. A disordered region spans residues 1–23 (MAKKSSIEKNNRRRKMTKNAAPK). A compositionally biased stretch (basic residues) spans 11–23 (NRRRKMTKNAAPK).

Belongs to the universal ribosomal protein uS14 family. As to quaternary structure, part of the 30S ribosomal subunit. Contacts proteins S3 and S10.

Functionally, binds 16S rRNA, required for the assembly of 30S particles and may also be responsible for determining the conformation of the 16S rRNA at the A site. The polypeptide is Small ribosomal subunit protein uS14 (Rhodopseudomonas palustris (strain BisB5)).